A 184-amino-acid polypeptide reads, in one-letter code: ATP synthase subunit delta (184 aa).

This sequence belongs to the ATPase delta chain family. As to quaternary structure, F-type ATPases have 2 components, F(1) - the catalytic core - and F(0) - the membrane proton channel. F(1) has five subunits: alpha(3), beta(3), gamma(1), delta(1), epsilon(1). F(0) has three main subunits: a(1), b(2) and c(10-14). The alpha and beta chains form an alternating ring which encloses part of the gamma chain. F(1) is attached to F(0) by a central stalk formed by the gamma and epsilon chains, while a peripheral stalk is formed by the delta and b chains.

The protein resides in the cell inner membrane. In terms of biological role, f(1)F(0) ATP synthase produces ATP from ADP in the presence of a proton or sodium gradient. F-type ATPases consist of two structural domains, F(1) containing the extramembraneous catalytic core and F(0) containing the membrane proton channel, linked together by a central stalk and a peripheral stalk. During catalysis, ATP synthesis in the catalytic domain of F(1) is coupled via a rotary mechanism of the central stalk subunits to proton translocation. This protein is part of the stalk that links CF(0) to CF(1). It either transmits conformational changes from CF(0) to CF(1) or is implicated in proton conduction. The sequence is that of ATP synthase subunit delta from Dichelobacter nodosus (strain VCS1703A).